A 486-amino-acid chain; its full sequence is Bile acid receptor (486 aa).

A Glycyl lysine isopeptide (Lys-Gly) (interchain with G-Cter in SUMO1) cross-link involves residue Lys-132. Positions 134 to 209 form a DNA-binding region, nuclear receptor; the sequence is DELCVVCGDR…MGMLAECMYT (76 aa). An NR C4-type zinc finger spans residues 137 to 157; that stretch reads CVVCGDRASGYHYNALTCEGC. Phosphoserine; by PKC/PRKCA is present on residues Ser-145 and Ser-164. N6-acetyllysine; by EP300 is present on Lys-167. The NR C4-type zinc-finger motif lies at 173–197; that stretch reads CKNGGNCVMDMYMRRKCQECRLRKC. Lys-220 carries the N6-methyllysine; by SETD7 modification. Lys-227 bears the N6-acetyllysine; by EP300 mark. The NR LBD domain maps to 262-486; sequence DQQTLLHFIM…PLLCEIWDVQ (225 aa). Lys-289 is covalently cross-linked (Glycyl lysine isopeptide (Lys-Gly) (interchain with G-Cter in SUMO1)). Chenodeoxycholate is bound by residues Arg-345, Tyr-375, and Tyr-383. Phosphothreonine; by PKC/PRKCZ is present on Thr-456. Position 461 (His-461) interacts with chenodeoxycholate.

Belongs to the nuclear hormone receptor family. NR1 subfamily. Heterodimer (via C-terminus) with RXRA (via DBD); the heterodimerization enhances the binding affinity for LXXLL motifs from coactivators. Binds DNA predominantly as a heterodimer with RXRA. After activation by agonist binding interacts with coactivators. Interacts with NCOA1, NCOA2, PPARGC1A, CARM1, SETD7, PRMT1, GPS2, SMARCA4 and MED1. Interacts with EP300 and SMARCD1. Interacts with XRCC5 and XRCC6; decreasing NR1H4/FXR transactivation activity towards ABCB11/BSEP. Interacts with PAGR1 and NCOA6; indicative for an association with an MLL2/MLL3 complex (ASCOM). Post-translationally, acetylated by EP300. Lys-227 as is the major acetylation site for EP300; the dynamicly regulated acetylation inhibits heterodimerization with RXRA and transactivation activity. Deacetylated by SIRT1. Methylation may increase transactivation of target genes. In terms of processing, phosphorylation by PKC/PRKCA increases transactivation activity by promoting association with PPARGC1A. Post-translationally, sumoylated upon ligand binding. In terms of tissue distribution, liver and hepatocyte-related cells express mainly FXRalpha1-type isoforms with isoform 3 and isoform 4 in approximately equal proportions. In intestine and kidney mainly FXRalpha2-type isoforms are expressed with isoform 1 and isoform 2 in approximately equal proportions. Expressed in pancreatic beta cells and macrophages.

It localises to the nucleus. Ligand-activated transcription factor. Receptor for bile acids (BAs) such as chenodeoxycholic acid (CDCA), lithocholic acid, deoxycholic acid (DCA) and allocholic acid (ACA). Plays a essential role in BA homeostasis through the regulation of genes involved in BA synthesis, conjugation and enterohepatic circulation. Also regulates lipid and glucose homeostasis and is involved innate immune response. The FXR-RXR heterodimer binds predominantly to farnesoid X receptor response elements (FXREs) containing two inverted repeats of the consensus sequence 5'-AGGTCA-3' in which the monomers are spaced by 1 nucleotide (IR-1) but also to tandem repeat DR1 sites with lower affinity, and can be activated by either FXR or RXR-specific ligands. It is proposed that monomeric nuclear receptors such as NR5A2/LRH-1 bound to coregulatory nuclear responsive element (NRE) halfsites located in close proximity to FXREs modulate transcriptional activity. In the liver activates transcription of the corepressor NR0B2 thereby indirectly inhibiting CYP7A1 and CYP8B1 (involved in BA synthesis) implicating at least in part histone demethylase KDM1A resulting in epigenomic repression, and SLC10A1/NTCP (involved in hepatic uptake of conjugated BAs). Activates transcription of the repressor MAFG (involved in regulation of BA synthesis). Activates transcription of SLC27A5/BACS and BAAT (involved in BA conjugation), ABCB11/BSEP (involved in bile salt export) by directly recruiting histone methyltransferase CARM1, and ABCC2/MRP2 (involved in secretion of conjugated BAs) and ABCB4 (involved in secretion of phosphatidylcholine in the small intestine). Activates transcription of SLC27A5/BACS and BAAT (involved in BA conjugation), ABCB11/BSEP (involved in bile salt export) by directly recruiting histone methyltransferase CARM1, and ABCC2/MRP2 (involved in secretion of conjugated BAs) and ABCB4 (involved in secretion of phosphatidylcholine in the small intestine). In the intestine activates FGF19 expression and secretion leading to hepatic CYP7A1 repression. The function also involves the coordinated induction of hepatic KLB/beta-klotho expression. Regulates transcription of liver UGT2B4 and SULT2A1 involved in BA detoxification; binding to the UGT2B4 promoter seems to imply a monomeric transactivation independent of RXRA. Modulates lipid homeostasis by activating liver NR0B2/SHP-mediated repression of SREBF1 (involved in de novo lipogenesis), expression of PLTP (involved in HDL formation), SCARB1 (involved in HDL hepatic uptake), APOE, APOC1, APOC4, PPARA (involved in beta-oxidation of fatty acids), VLDLR and SDC1 (involved in the hepatic uptake of LDL and IDL remnants), and inhibiting expression of MTTP (involved in VLDL assembly. Increases expression of APOC2 (promoting lipoprotein lipase activity implicated in triglyceride clearance). Transrepresses APOA1 involving a monomeric competition with NR2A1 for binding to a DR1 element. Also reduces triglyceride clearance by inhibiting expression of ANGPTL3 and APOC3 (both involved in inhibition of lipoprotein lipase). Involved in glucose homeostasis by modulating hepatic gluconeogenesis through activation of NR0B2/SHP-mediated repression of respective genes. Modulates glycogen synthesis (inducing phosphorylation of glycogen synthase kinase-3). Modulates glucose-stimulated insulin secretion and is involved in insulin resistance. Involved in intestinal innate immunity. Plays a role in protecting the distal small intestine against bacterial overgrowth and preservation of the epithelial barrier. Down-regulates inflammatory cytokine expression in several types of immune cells including macrophages and mononuclear cells. Mediates trans-repression of TLR4-induced cytokine expression; the function seems to require its sumoylation and prevents N-CoR nuclear receptor corepressor clearance from target genes such as IL1B and NOS2. Involved in the TLR9-mediated protective mechanism in intestinal inflammation. Plays an anti-inflammatory role in liver inflammation; proposed to inhibit pro-inflammatory (but not antiapoptotic) NF-kappa-B signaling). In terms of biological role, promotes transcriptional activation of target genes NR0B2/SHP (inducible by unconjugated CDCA), SLC51B/OSTB (inducible by unconjugated CDCA and DCA) and FABP6/IBAP; low activity for ABCB11/BSEP (inducible by unconjugated CDCA, DCA and ACA); not inducible by taurine- and glycine-amidated CDCA. Its function is as follows. Promotes transcriptional activation of target genes ABCB11/BSEP (inducible by unconjugated CDCA, DCA and ACA), NR0B2/SHP (inducible by unconjugated CDCA DCA and ACA), SLC51B/OSTB (inducible by unconjugated CDCA and DCA) and FABP6/IBAP; not inducible by taurine- and glycine-amidated CDCA. Functionally, promotes transcriptional activation of target genes NR0B2/SHP (inducible by unconjugated CDCA), SLC51B/OSTB (inducible by unconjugated CDCA and DCA) and IBAP; low activity for ABCB11/BSEP (inducible by unconjugated CDCA, DCA and ACA); not inducible by taurine- and glycine-amidated CDCA. Promotes transcriptional activation of target genes ABCB11/BSEP (inducible by unconjugated CDCA, ACA and DCA), NR0B2/SHP (inducible by unconjugated CDCA, ACA and DCA), SLC51B/OSTB (inducible by unconjugated CDCA and DCA) and FABP6/IBAP; most efficient isoform compared to isoforms 1 to 3; not inducible by taurine- and glycine-amidated CDCA. This chain is Bile acid receptor (NR1H4), found in Homo sapiens (Human).